Here is a 557-residue protein sequence, read N- to C-terminus: Probable protein kinase UbiB (557 aa).

The region spanning 121-509 (SFDTVPLASA…RKLQTRVVTA (389 aa)) is the Protein kinase domain. ATP contacts are provided by residues 127 to 135 (LASASIAQV) and Lys154. Asp289 serves as the catalytic Proton acceptor. The next 2 helical transmembrane spans lie at 506–526 (VVTA…YGLH) and 535–555 (VPVW…VAWL).

This sequence belongs to the ABC1 family. UbiB subfamily.

It is found in the cell inner membrane. The protein operates within cofactor biosynthesis; ubiquinone biosynthesis [regulation]. Functionally, is probably a protein kinase regulator of UbiI activity which is involved in aerobic coenzyme Q (ubiquinone) biosynthesis. The protein is Probable protein kinase UbiB of Xanthomonas axonopodis pv. citri (strain 306).